The following is a 248-amino-acid chain: 21S rRNA pseudouridine(2819) synthase (248 aa).

Aspartate 58 is a catalytic residue.

It belongs to the pseudouridine synthase RluA family.

It localises to the mitochondrion. It catalyses the reaction uridine(2819) in 21S rRNA = pseudouridine(2819) in 21S rRNA. Functionally, pseudouridylate synthase responsible for the pseudouridine-2819 formation in mitochondrial 21S rRNA. May modulate the efficiency or the fidelity of the mitochondrial translation machinery. This Candida albicans (strain SC5314 / ATCC MYA-2876) (Yeast) protein is 21S rRNA pseudouridine(2819) synthase (PUS5).